Reading from the N-terminus, the 304-residue chain is NADH-cytochrome b5 reductase 2 (304 aa).

The helical transmembrane segment at 9 to 29 (MLVALAVIGVTVLLFLIKALG) threads the bilayer. The region spanning 43–155 (NAKYPLPLIE…RGPNGLLVYK (113 aa)) is the FAD-binding FR-type domain. Residues 135–150 (DSLK…GPNG) and 174–209 (VAKH…KCSL) each bind FAD.

It belongs to the flavoprotein pyridine nucleotide cytochrome reductase family. FAD is required as a cofactor.

The protein resides in the membrane. The enzyme catalyses 2 Fe(III)-[cytochrome b5] + NADH = 2 Fe(II)-[cytochrome b5] + NAD(+) + H(+). Its function is as follows. NADH-cytochrome b5 reductases are involved in desaturation and elongation of fatty acids, cholesterol biosynthesis and drug metabolism. The polypeptide is NADH-cytochrome b5 reductase 2 (cyb5r2) (Xenopus tropicalis (Western clawed frog)).